The sequence spans 162 residues: Beta-lactoglobulin-1 (162 aa).

Cystine bridges form between Cys-66–Cys-160 and Cys-106–Cys-119.

This sequence belongs to the calycin superfamily. Lipocalin family. Monomer.

It is found in the secreted. In terms of biological role, lactoglobulin is the primary component of whey, it binds retinol and is probably involved in the transport of that molecule. In Felis catus (Cat), this protein is Beta-lactoglobulin-1 (LGB1).